A 342-amino-acid chain; its full sequence is RNA 3'-terminal phosphate cyclase (342 aa).

ATP-binding positions include glutamine 100 and 283–287; that span reads FLGDQ. Histidine 307 serves as the catalytic Tele-AMP-histidine intermediate.

This sequence belongs to the RNA 3'-terminal cyclase family. Type 1 subfamily.

Its subcellular location is the cytoplasm. The enzyme catalyses a 3'-end 3'-phospho-ribonucleotide-RNA + ATP = a 3'-end 2',3'-cyclophospho-ribonucleotide-RNA + AMP + diphosphate. Its function is as follows. Catalyzes the conversion of 3'-phosphate to a 2',3'-cyclic phosphodiester at the end of RNA. The mechanism of action of the enzyme occurs in 3 steps: (A) adenylation of the enzyme by ATP; (B) transfer of adenylate to an RNA-N3'P to produce RNA-N3'PP5'A; (C) and attack of the adjacent 2'-hydroxyl on the 3'-phosphorus in the diester linkage to produce the cyclic end product. The biological role of this enzyme is unknown but it is likely to function in some aspects of cellular RNA processing. The polypeptide is RNA 3'-terminal phosphate cyclase (rtcA) (Pyrococcus abyssi (strain GE5 / Orsay)).